The chain runs to 425 residues: Enolase (425 aa).

Gln-162 is a (2R)-2-phosphoglycerate binding site. The active-site Proton donor is Glu-204. Mg(2+) contacts are provided by Asp-241, Glu-282, and Asp-309. (2R)-2-phosphoglycerate is bound by residues Lys-334, Arg-363, Ser-364, and Lys-385. Catalysis depends on Lys-334, which acts as the Proton acceptor.

Belongs to the enolase family. It depends on Mg(2+) as a cofactor.

The protein localises to the cytoplasm. It is found in the secreted. Its subcellular location is the cell surface. It catalyses the reaction (2R)-2-phosphoglycerate = phosphoenolpyruvate + H2O. It functions in the pathway carbohydrate degradation; glycolysis; pyruvate from D-glyceraldehyde 3-phosphate: step 4/5. Functionally, catalyzes the reversible conversion of 2-phosphoglycerate (2-PG) into phosphoenolpyruvate (PEP). It is essential for the degradation of carbohydrates via glycolysis. This Micrococcus luteus (strain ATCC 4698 / DSM 20030 / JCM 1464 / CCM 169 / CCUG 5858 / IAM 1056 / NBRC 3333 / NCIMB 9278 / NCTC 2665 / VKM Ac-2230) (Micrococcus lysodeikticus) protein is Enolase.